Consider the following 266-residue polypeptide: tRNA pseudouridine synthase A (266 aa).

Asp-57 (nucleophile) is an active-site residue. Position 115 (Tyr-115) interacts with substrate.

Belongs to the tRNA pseudouridine synthase TruA family. In terms of assembly, homodimer.

It carries out the reaction uridine(38/39/40) in tRNA = pseudouridine(38/39/40) in tRNA. Functionally, formation of pseudouridine at positions 38, 39 and 40 in the anticodon stem and loop of transfer RNAs. The protein is tRNA pseudouridine synthase A of Buchnera aphidicola subsp. Acyrthosiphon pisum (strain APS) (Acyrthosiphon pisum symbiotic bacterium).